Here is a 594-residue protein sequence, read N- to C-terminus: Transcription factor TFIIIB component B'' (594 aa).

The segment at methionine 1–lysine 169 is disordered. Serine 49 is modified (phosphoserine). The segment covering leucine 150 to asparagine 168 has biased composition (polar residues). Position 178 is a phosphoserine (serine 178). 2 disordered regions span residues serine 217–glutamate 245 and alanine 317–arginine 343. 2 stretches are compositionally biased toward basic and acidic residues: residues serine 225–alanine 241 and alanine 317–glutamate 330. Residues serine 415–proline 466 enclose the SANT domain. Positions lysine 520–threonine 529 are enriched in basic and acidic residues. 2 disordered regions span residues lysine 520–methionine 547 and leucine 567–glutamine 594. Positions aspartate 579 to glutamine 594 are enriched in acidic residues.

The protein belongs to the TFC5 family. In terms of assembly, TFIIIB comprises the TATA-binding protein (TBP), the B-related factor (BRF) and the B'' component (BDP1). Interacts with TFC4.

Its subcellular location is the nucleus. General activator of RNA polymerase III transcription. This Saccharomyces cerevisiae (strain ATCC 204508 / S288c) (Baker's yeast) protein is Transcription factor TFIIIB component B'' (BDP1).